The primary structure comprises 642 residues: MPIITLPDGSQRQFDNPVSVLEVAQSIGSGLAKATIAGRVNGERRDASDMISEDANLEIITAKDEDGLEIIRHSTAHLLGHAIKQLFPNVKMAIGPTIDNGFYYDIDLDRSLTQEDIDTLEKRMLELAKTNYDVIKKRVSWQEARDTFESRAEPYKIAILDENIAKDDQPALYHHEEYIDMCRGPHVPNMRFCHHFKLMKVAGAYWRGNSDNKMLQRIYGTAWADKKQLADYLHRLEEAAKRDHRKIGKALDLYHMQEEAPGMVFWHNDGWTIFRELETFVRTKLKEYDYQEVKGPFMMDRVLWERTGHWQNYADLMFTTQSENREYAIKPMNCPGHVQIFNQGLKSYRDLPIRMAEFGSCHRNEPSGSLHGLMRVRGFTQDDAHIFCTEDQIESEVTSCIKMVYDIYSTFGFTDIFVKLSTRPEKRIGEDVMWDRAEQGLANALKHNGLEYEIQEGEGAFYGPKIEFALRDCLDREWQCGTIQLDFALPGRLDATYVAEDNARRTPVMIHRAILGSIERFIGIITEEYAGFFPTWLAPIQAVVMNITDSQADYVQKVVKQFSEAGLRVKADIRNEKVGFKIREHTLRRVPYMLVCGDKEIVENKIAVRTRKGTDLGTFSVEEFVEILKQQVRKRELTLLGE.

The TGS domain maps to 1-61 (MPIITLPDGS…SEDANLEIIT (61 aa)). The catalytic stretch occupies residues 243–534 (DHRKIGKALD…ITEEYAGFFP (292 aa)). Cys-334, His-385, and His-511 together coordinate Zn(2+).

The protein belongs to the class-II aminoacyl-tRNA synthetase family. As to quaternary structure, homodimer. The cofactor is Zn(2+).

The protein localises to the cytoplasm. The catalysed reaction is tRNA(Thr) + L-threonine + ATP = L-threonyl-tRNA(Thr) + AMP + diphosphate + H(+). Its function is as follows. Catalyzes the attachment of threonine to tRNA(Thr) in a two-step reaction: L-threonine is first activated by ATP to form Thr-AMP and then transferred to the acceptor end of tRNA(Thr). Also edits incorrectly charged L-seryl-tRNA(Thr). This is Threonine--tRNA ligase from Histophilus somni (strain 129Pt) (Haemophilus somnus).